Reading from the N-terminus, the 68-residue chain is Large ribosomal subunit protein uL29 (68 aa).

The protein belongs to the universal ribosomal protein uL29 family.

This is Large ribosomal subunit protein uL29 from Maricaulis maris (strain MCS10) (Caulobacter maris).